A 279-amino-acid polypeptide reads, in one-letter code: Tumor protein p63-regulated gene 1 protein (279 aa).

The tract at residues 1–49 is disordered; the sequence is MSTIGSFDGFQPVSLKQEEEDQPSENDHLSTKEGNSGKDPGSRRISRQQ. In terms of domain architecture, hSac2 spans 72-259; the sequence is VTRPGAIETA…ILIETYTGLM (188 aa).

The protein belongs to the TPRG1 family. In terms of tissue distribution, highly expressed in skin. Also detected at low levels in tongue and esophagus.

Its subcellular location is the cytoplasm. This is Tumor protein p63-regulated gene 1 protein from Mus musculus (Mouse).